Reading from the N-terminus, the 615-residue chain is Zinc metalloproteinase R519 (615 aa).

In terms of domain architecture, Peptidase M13 spans 1-611; sequence MTYRSCIPQN…LDPQLRSRIL (611 aa). His454 is a binding site for Zn(2+). The active site involves Glu455. Zn(2+) contacts are provided by His458 and Glu513. The active-site Proton donor is the Asp517.

Belongs to the peptidase M13 family. Zn(2+) is required as a cofactor.

Functionally, zinc metalloprotease. The polypeptide is Zinc metalloproteinase R519 (Acanthamoeba polyphaga (Amoeba)).